Consider the following 376-residue polypeptide: MANSWRISALRERHLALGSQLEDWNGMGTAWTYASDLADHHEAIRTRAGLMDVSGLKKVHYVGPHAESLLDYATTRDIGKLYPGKSVYACLLDEDGKFIDDCIVYRTGPNAFMVVHGAGTGHEMLIRSAQGRQVAVLFDDDLHDLSLQGPRAVDFLAEHVPGIRDLPYFHHLQTKLFDRPVMISRTGYTGERGYEIFCKAADAPAIWDAILEQGKGYGIIPCAFTALDWLRVESYLLFFPYDNSQMYPFADQKAGDTLWELGLDFTVSPGKQDFRGAGEHYRLKGQERFKIFGVLLDGHQAAQGGDTLWHDGRQVGVITCSMYSRLTERSMAIARVEPQIAEQGVPLQVRGSLDCAAIAHSLPFDDPEKKKRTAKG.

As to quaternary structure, the heme-dependent oxidative N-demethylase (HODM) is a heterotetramer composed of a catalytic alpha subunit, a FMN/2Fe-2S-dependent oxidoreductase beta subunit, a gamma subunit with putative aminotransferase activity, and a delta subunit of unknown function.

In terms of biological role, component of the heme-dependent oxidative N-demethylase (HODM) enzyme, that catalyzes the NADPH-dependent oxidation of dimethylamine (DMA) to methylamine (MA) and formaldehyde. Functions in bacterial methylated amine catabolism, linking alkylamine oxidation to the tetrahydrofolate C1 pool. The gamma subunit of HODM may act as an aminomethyltransferase involved in the detoxification of formaldehyde released by the alpha subunit; this process requires tetrahydrofolate (THF). The sequence is that of Heme-dependent oxidative N-demethylase gamma subunit from Ectopseudomonas mendocina (strain ymp) (Pseudomonas mendocina).